An 85-amino-acid polypeptide reads, in one-letter code: NAD(P)H-quinone oxidoreductase subunit O (85 aa).

This sequence belongs to the complex I NdhO subunit family. In terms of assembly, NDH-1 can be composed of about 15 different subunits; different subcomplexes with different compositions have been identified which probably have different functions.

Its subcellular location is the cellular thylakoid membrane. The enzyme catalyses a plastoquinone + NADH + (n+1) H(+)(in) = a plastoquinol + NAD(+) + n H(+)(out). It carries out the reaction a plastoquinone + NADPH + (n+1) H(+)(in) = a plastoquinol + NADP(+) + n H(+)(out). In terms of biological role, NDH-1 shuttles electrons from an unknown electron donor, via FMN and iron-sulfur (Fe-S) centers, to quinones in the respiratory and/or the photosynthetic chain. The immediate electron acceptor for the enzyme in this species is believed to be plastoquinone. Couples the redox reaction to proton translocation, and thus conserves the redox energy in a proton gradient. Cyanobacterial NDH-1 also plays a role in inorganic carbon-concentration. The protein is NAD(P)H-quinone oxidoreductase subunit O of Synechococcus sp. (strain WH7803).